We begin with the raw amino-acid sequence, 126 residues long: Small ribosomal subunit protein eS24 (126 aa).

Positions 98–126 (LYTKPQTSRKQRKEKKNRLKKAGKKTAKK) are disordered. Positions 104-126 (TSRKQRKEKKNRLKKAGKKTAKK) are enriched in basic residues.

The protein belongs to the eukaryotic ribosomal protein eS24 family.

This chain is Small ribosomal subunit protein eS24 (rps24), found in Dictyostelium discoideum (Social amoeba).